The following is a 361-amino-acid chain: Fructose-bisphosphate aldolase (361 aa).

Thr-2 is modified (N-acetylthreonine). The substrate site is built by Arg-56 and Lys-147. The Proton acceptor role is filled by Glu-188. The active-site Schiff-base intermediate with dihydroxyacetone-P is the Lys-230.

Belongs to the class I fructose-bisphosphate aldolase family. In terms of assembly, homotetramer. As to expression, mainly expressed in the heads and partly in the thoraxes of adult flies. Expressed in all adult tissues. The Alpha-beta mRNA shows strong expression in the abdomens of adults. In terms of tissue distribution, mainly expressed in adult abdominal regions and is also expressed in lesser amounts in other parts of the body. The Beta-gamma mRNA is expressed in adult heads.

The enzyme catalyses beta-D-fructose 1,6-bisphosphate = D-glyceraldehyde 3-phosphate + dihydroxyacetone phosphate. It functions in the pathway carbohydrate degradation; glycolysis; D-glyceraldehyde 3-phosphate and glycerone phosphate from D-glucose: step 4/4. Enzyme of the glycolytic pathway. Glycolysis is essential in glial cells but not in neurons; neurons rely on the citric acid cycle for their energy needs, and on lactate and alanine secreted into the hemolymph by glial cells to fuel it. May take part in developmental stage-specific or tissue -specific sugar-phosphate metabolisms. Protein acts on two substrates fructose 1,6-bisphosphate and fructose 1-phosphate (like other class I aldolases). This Drosophila melanogaster (Fruit fly) protein is Fructose-bisphosphate aldolase.